Reading from the N-terminus, the 465-residue chain is Siroheme synthase (465 aa).

Residues 1-203 form a precorrin-2 dehydrogenase /sirohydrochlorin ferrochelatase region; the sequence is MDFLPLFHSL…GRPAEAERLL (203 aa). NAD(+) contacts are provided by residues 22-23 and 43-44; these read EV and PQ. At Ser128 the chain carries Phosphoserine. A uroporphyrinogen-III C-methyltransferase region spans residues 217–465; sequence GEVYLVGAGP…AWFEGAREGA (249 aa). Residue Pro226 coordinates S-adenosyl-L-methionine. The Proton acceptor role is filled by Asp249. Lys271 serves as the catalytic Proton donor. Residues 302–304, Ile307, 332–333, Met384, and Gly413 each bind S-adenosyl-L-methionine; these read GGD and TA.

This sequence in the N-terminal section; belongs to the precorrin-2 dehydrogenase / sirohydrochlorin ferrochelatase family. In the C-terminal section; belongs to the precorrin methyltransferase family.

It carries out the reaction uroporphyrinogen III + 2 S-adenosyl-L-methionine = precorrin-2 + 2 S-adenosyl-L-homocysteine + H(+). The catalysed reaction is precorrin-2 + NAD(+) = sirohydrochlorin + NADH + 2 H(+). It catalyses the reaction siroheme + 2 H(+) = sirohydrochlorin + Fe(2+). Its pathway is cofactor biosynthesis; adenosylcobalamin biosynthesis; precorrin-2 from uroporphyrinogen III: step 1/1. It participates in cofactor biosynthesis; adenosylcobalamin biosynthesis; sirohydrochlorin from precorrin-2: step 1/1. It functions in the pathway porphyrin-containing compound metabolism; siroheme biosynthesis; precorrin-2 from uroporphyrinogen III: step 1/1. The protein operates within porphyrin-containing compound metabolism; siroheme biosynthesis; siroheme from sirohydrochlorin: step 1/1. Its pathway is porphyrin-containing compound metabolism; siroheme biosynthesis; sirohydrochlorin from precorrin-2: step 1/1. Multifunctional enzyme that catalyzes the SAM-dependent methylations of uroporphyrinogen III at position C-2 and C-7 to form precorrin-2 via precorrin-1. Then it catalyzes the NAD-dependent ring dehydrogenation of precorrin-2 to yield sirohydrochlorin. Finally, it catalyzes the ferrochelation of sirohydrochlorin to yield siroheme. In Pseudomonas paraeruginosa (strain DSM 24068 / PA7) (Pseudomonas aeruginosa (strain PA7)), this protein is Siroheme synthase.